We begin with the raw amino-acid sequence, 106 residues long: Large ribosomal subunit protein uL24 (106 aa).

Belongs to the universal ribosomal protein uL24 family. In terms of assembly, part of the 50S ribosomal subunit.

Functionally, one of two assembly initiator proteins, it binds directly to the 5'-end of the 23S rRNA, where it nucleates assembly of the 50S subunit. In terms of biological role, one of the proteins that surrounds the polypeptide exit tunnel on the outside of the subunit. This chain is Large ribosomal subunit protein uL24, found in Dechloromonas aromatica (strain RCB).